The following is a 437-amino-acid chain: UDP-N-acetylmuramate--L-alanine ligase (437 aa).

108–114 (GAHGKTS) contributes to the ATP binding site.

Belongs to the MurCDEF family.

Its subcellular location is the cytoplasm. It carries out the reaction UDP-N-acetyl-alpha-D-muramate + L-alanine + ATP = UDP-N-acetyl-alpha-D-muramoyl-L-alanine + ADP + phosphate + H(+). The protein operates within cell wall biogenesis; peptidoglycan biosynthesis. In terms of biological role, cell wall formation. This is UDP-N-acetylmuramate--L-alanine ligase from Staphylococcus carnosus (strain TM300).